The primary structure comprises 157 residues: Small ribosomal subunit protein uS7 (157 aa).

Belongs to the universal ribosomal protein uS7 family. In terms of assembly, part of the 30S ribosomal subunit. Contacts proteins S9 and S11.

Its function is as follows. One of the primary rRNA binding proteins, it binds directly to 16S rRNA where it nucleates assembly of the head domain of the 30S subunit. Is located at the subunit interface close to the decoding center, probably blocks exit of the E-site tRNA. This is Small ribosomal subunit protein uS7 from Borrelia duttonii (strain Ly).